A 303-amino-acid polypeptide reads, in one-letter code: Pycsar effector protein BcPycTIR (303 aa).

22 to 138 (KLVGGDKGLA…RRMAKELSKR (117 aa)) lines the a nucleoside 3',5'-cyclic phosphate pocket. Residues 154–273 (RVFVISSAEA…DMAGVTTIPY (120 aa)) are TIR-like.

As to quaternary structure, purified protein forms large 2-dimensional sheets when incubated with cUMP and shorter filaments in the presence of cCMP.

It is found in the cytoplasm. The catalysed reaction is NAD(+) + H2O = ADP-D-ribose + nicotinamide + H(+). With respect to regulation, activated by cyclic UMP (cUMP) and to a lesser extent by cCMP. Functionally, pycsar (pyrimidine cyclase system for antiphage resistance) provides immunity against bacteriophage. The pyrimidine cyclase (PycC) synthesizes cyclic nucleotides in response to infection; these serve as specific second messenger signals. The signals activate the adjacent effector, leading to bacterial cell death and abortive phage infection. A clade B Pycsar system. Its function is as follows. The effector protein of a two-gene Pycsar system. Upon activation by cyclic UMP (cUMP) degrades cellular NAD(+). Expression of this and adjacent uridylate cyclase BcPycC (AC A0A0J5ZXG5) probably confers resistance to bacteriophage. The genes are probably only expressed in response to bacteriophage infection. This protein probably only responds to cUMP (produced by its cognate NTP cyclase). This chain is Pycsar effector protein BcPycTIR, found in Burkholderia cepacia (Pseudomonas cepacia).